The sequence spans 262 residues: MKAKILIDAYEAFCPLDLSMEGDVKGLQMGSLDKDIRKVMITLDIRESTVAEAIKNEVDLIITKHAPIFKPLKDLVSSPQRDILLDLVKHDISVYVSHTNIDIVPGGLNDWFCDLLEIKEATYLSETKEGFGIGRIGTVKEQALEELASKVKRVFDLDTVRLIRYDKENPLISKIAICGGSGGEFYQDAVQKGADVYITGDIYYHTAQEMLTEGLFAVDPGHHIEVLFTEKLKEKLQGWKEENGWDVSIISSKASTNPFSHL.

Residues H65, D102, H222, and E225 each coordinate a divalent metal cation.

The protein belongs to the GTP cyclohydrolase I type 2/NIF3 family. In terms of assembly, homohexamer.

In Streptococcus pyogenes serotype M6 (strain ATCC BAA-946 / MGAS10394), this protein is GTP cyclohydrolase 1 type 2 homolog.